The following is a 152-amino-acid chain: ESAT-6 secretion machinery protein EssA (152 aa).

Topologically, residues 1–114 (MLMNSVIALT…PYIQNKQEKK (114 aa)) are cytoplasmic. The helical transmembrane segment at 115-135 (IFPYILMSVGAFLTLGFVIFS) threads the bilayer. Residues 136–152 (IHKGRRTKNESARKSNI) lie on the Extracellular side of the membrane.

Belongs to the EssA family.

It is found in the cell membrane. Functionally, component of the ESAT-6 secretion system (Ess). Required for the secretion of EsxA and EsxB. The chain is ESAT-6 secretion machinery protein EssA from Staphylococcus aureus (strain Mu50 / ATCC 700699).